Here is a 465-residue protein sequence, read N- to C-terminus: Cysteine--tRNA ligase 2 (465 aa).

Residue Cys30 participates in Zn(2+) binding. Positions 32 to 42 (ITVYDYCHVGH) match the 'HIGH' region motif. Positions 214, 239, and 243 each coordinate Zn(2+). The 'KMSKS' region signature appears at 271–275 (KMSKS). Lys274 serves as a coordination point for ATP.

The protein belongs to the class-I aminoacyl-tRNA synthetase family. As to quaternary structure, monomer. The cofactor is Zn(2+).

It is found in the cytoplasm. It carries out the reaction tRNA(Cys) + L-cysteine + ATP = L-cysteinyl-tRNA(Cys) + AMP + diphosphate. In Burkholderia lata (strain ATCC 17760 / DSM 23089 / LMG 22485 / NCIMB 9086 / R18194 / 383), this protein is Cysteine--tRNA ligase 2.